The chain runs to 519 residues: Tachykinin-like peptides receptor 99D (519 aa).

Topologically, residues 1 to 100 are extracellular; sequence MENRSDFEAD…SFAFVVPWWR (100 aa). Asn3, Asn19, Asn22, and Asn61 each carry an N-linked (GlcNAc...) asparagine glycan. Residues 101–123 form a helical membrane-spanning segment; the sequence is QVLWSILFGGMVIVATGGNLIVV. The Cytoplasmic portion of the chain corresponds to 124-134; the sequence is WIVMTTKRMRT. The chain crosses the membrane as a helical span at residues 135–155; sequence VTNYFIVNLSIADAMVSSLNV. Residues 156 to 175 are Extracellular-facing; that stretch reads TFNYYYMLDSDWPFGEFYCK. Cys174 and Cys254 are disulfide-bonded. A helical membrane pass occupies residues 176–197; the sequence is LSQFIAMLSICASVFTLMAISI. The Cytoplasmic segment spans residues 198–217; that stretch reads DRYVAIIRPLQPRMSKRCNL. Residues 218-238 traverse the membrane as a helical segment; it reads AIAAVIWLASTLISCPMMIIY. At 239–270 the chain is on the extracellular side; sequence RTEEVPVRGLSNRTVCYPEWPDGPTNHSTMES. A helical membrane pass occupies residues 271 to 292; it reads LYNILIIILTYFLPIVSMTVTY. Over 293 to 324 the chain is Cytoplasmic; the sequence is SRVGIELWGSKTIGECTPRQVENVRSKRRVVK. A helical transmembrane segment spans residues 325–346; sequence MMIVVVLIFAICWLPFHSYFII. Residues 347–361 are Extracellular-facing; that stretch reads TSCYPAITEAPFIQE. The helical transmembrane segment at 362–384 threads the bilayer; sequence LYLAIYWLAMSNSMYNPIIYCWM. Topologically, residues 385–519 are cytoplasmic; the sequence is NSRFRYGFKM…STANTTQLLS (135 aa). Cys399 is lipidated: S-palmitoyl cysteine. Residues 444–519 are disordered; it reads PSSPKSHRIS…STANTTQLLS (76 aa). Composition is skewed to polar residues over residues 454-465 and 487-499; these read HSGTGRSATLRN and SYQQEMQQRWSGP. The span at 500–519 shows a compositional bias: low complexity; that stretch reads NSATAVTNSSSTANTTQLLS.

It belongs to the G-protein coupled receptor 1 family. In terms of tissue distribution, during late embryogenesis (stages 11-15), expressed in the brain and in a specific subset of neurons in each neuromere of the developing ventral ganglion. Expressed in the cortex of the adult brain, which contains the neuronal cell bodies.

It is found in the cell membrane. In terms of biological role, receptor for tachykinin-like peptides. The polypeptide is Tachykinin-like peptides receptor 99D (TkR99D) (Drosophila melanogaster (Fruit fly)).